The following is a 339-amino-acid chain: tRNA N6-adenosine threonylcarbamoyltransferase (339 aa).

Residues H111 and H115 each contribute to the Fe cation site. Substrate-binding positions include V134 to G138, D167, G180, and N279. D307 contacts Fe cation.

This sequence belongs to the KAE1 / TsaD family. Fe(2+) serves as cofactor.

The protein resides in the cytoplasm. The enzyme catalyses L-threonylcarbamoyladenylate + adenosine(37) in tRNA = N(6)-L-threonylcarbamoyladenosine(37) in tRNA + AMP + H(+). Functionally, required for the formation of a threonylcarbamoyl group on adenosine at position 37 (t(6)A37) in tRNAs that read codons beginning with adenine. Is involved in the transfer of the threonylcarbamoyl moiety of threonylcarbamoyl-AMP (TC-AMP) to the N6 group of A37, together with TsaE and TsaB. TsaD likely plays a direct catalytic role in this reaction. This chain is tRNA N6-adenosine threonylcarbamoyltransferase, found in Syntrophobacter fumaroxidans (strain DSM 10017 / MPOB).